The chain runs to 98 residues: MPIIYMNITLAFIISLLGMLVYRSHLMSSLLCLEGMMLSLFMMSTLMALNMHFPLANIMPIALLVFAACEAAVGLALLVSISNMYGLDHIHNLNLLQC.

Transmembrane regions (helical) follow at residues 1 to 21 (MPII…GMLV), 29 to 49 (SLLC…LMAL), and 61 to 81 (IALL…LVSI).

It belongs to the complex I subunit 4L family. Core subunit of respiratory chain NADH dehydrogenase (Complex I) which is composed of 45 different subunits.

The protein resides in the mitochondrion inner membrane. It catalyses the reaction a ubiquinone + NADH + 5 H(+)(in) = a ubiquinol + NAD(+) + 4 H(+)(out). Functionally, core subunit of the mitochondrial membrane respiratory chain NADH dehydrogenase (Complex I) which catalyzes electron transfer from NADH through the respiratory chain, using ubiquinone as an electron acceptor. Part of the enzyme membrane arm which is embedded in the lipid bilayer and involved in proton translocation. The sequence is that of NADH-ubiquinone oxidoreductase chain 4L (MT-ND4L) from Piliocolobus badius (Western red colobus).